Consider the following 31-residue polypeptide: Cytochrome b6-f complex subunit 8 (31 aa).

Residues Ile-5–Val-25 traverse the membrane as a helical segment.

This sequence belongs to the PetN family. In terms of assembly, the 4 large subunits of the cytochrome b6-f complex are cytochrome b6, subunit IV (17 kDa polypeptide, PetD), cytochrome f and the Rieske protein, while the 4 small subunits are PetG, PetL, PetM and PetN. The complex functions as a dimer.

It localises to the plastid. The protein resides in the chloroplast thylakoid membrane. Component of the cytochrome b6-f complex, which mediates electron transfer between photosystem II (PSII) and photosystem I (PSI), cyclic electron flow around PSI, and state transitions. The sequence is that of Cytochrome b6-f complex subunit 8 from Cicer arietinum (Chickpea).